The primary structure comprises 98 residues: NADH-ubiquinone oxidoreductase chain 4L (98 aa).

3 helical membrane-spanning segments follow: residues 1–21 (MSLI…GLLM), 29–49 (SLLC…MMVL), and 61–81 (IILL…LVMI).

This sequence belongs to the complex I subunit 4L family. In terms of assembly, core subunit of respiratory chain NADH dehydrogenase (Complex I) which is composed of 45 different subunits.

Its subcellular location is the mitochondrion inner membrane. It carries out the reaction a ubiquinone + NADH + 5 H(+)(in) = a ubiquinol + NAD(+) + 4 H(+)(out). Its function is as follows. Core subunit of the mitochondrial membrane respiratory chain NADH dehydrogenase (Complex I) which catalyzes electron transfer from NADH through the respiratory chain, using ubiquinone as an electron acceptor. Part of the enzyme membrane arm which is embedded in the lipid bilayer and involved in proton translocation. This Ceratotherium simum (White rhinoceros) protein is NADH-ubiquinone oxidoreductase chain 4L (MT-ND4L).